The following is a 182-amino-acid chain: Translation initiation factor IF-3 (182 aa).

The protein belongs to the IF-3 family. In terms of assembly, monomer.

The protein localises to the cytoplasm. Functionally, IF-3 binds to the 30S ribosomal subunit and shifts the equilibrium between 70S ribosomes and their 50S and 30S subunits in favor of the free subunits, thus enhancing the availability of 30S subunits on which protein synthesis initiation begins. The polypeptide is Translation initiation factor IF-3 (Thermosynechococcus vestitus (strain NIES-2133 / IAM M-273 / BP-1)).